A 152-amino-acid polypeptide reads, in one-letter code: MVTVLRLSSLCRANRASAFKSLLIRPVPCLSQDLHTVQTSQIHTSQNHHAASKAASLHWTSERALSVALLGLLPAAYLYPGAAVDYSLAAALTLHGHWGLGQVVTDYVHGDAKIKLANTSLFALSALTFAGLCYFNYHDVGICKAVAMLWSL.

A mitochondrion-targeting transit peptide spans 1-21; sequence MVTVLRLSSLCRANRASAFKS. Over 22-56 the chain is Mitochondrial matrix; it reads LLIRPVPCLSQDLHTVQTSQIHTSQNHHAASKAAS. The helical transmembrane segment at 57-78 threads the bilayer; sequence LHWTSERALSVALLGLLPAAYL. Topologically, residues 79–83 are mitochondrial intermembrane; the sequence is YPGAA. The chain crosses the membrane as a helical span at residues 84–104; the sequence is VDYSLAAALTLHGHWGLGQVV. Heme b is bound at residue His-95. Over 105–113 the chain is Mitochondrial matrix; that stretch reads TDYVHGDAK. Residue Tyr-107 coordinates a ubiquinone. The helical transmembrane segment at 114–135 threads the bilayer; that stretch reads IKLANTSLFALSALTFAGLCYF. At 136–152 the chain is on the mitochondrial intermembrane side; it reads NYHDVGICKAVAMLWSL.

Belongs to the CybS family. As to quaternary structure, component of complex II composed of four subunits: the flavoprotein (FP) SDHA, iron-sulfur protein (IP) SDHB, and a cytochrome b560 composed of SDHC and SDHD.

The protein resides in the mitochondrion inner membrane. It functions in the pathway carbohydrate metabolism; tricarboxylic acid cycle. Functionally, membrane-anchoring subunit of succinate dehydrogenase (SDH) that is involved in complex II of the mitochondrial electron transport chain and is responsible for transferring electrons from succinate to ubiquinone (coenzyme Q). SDH also oxidizes malate to the non-canonical enol form of oxaloacetate, enol-oxaloacetate. Enol-oxaloacetate, which is a potent inhibitor of the succinate dehydrogenase activity, is further isomerized into keto-oxaloacetate. The chain is Succinate dehydrogenase [ubiquinone] cytochrome b small subunit A, mitochondrial (sdhd-a) from Xenopus laevis (African clawed frog).